Here is an 87-residue protein sequence, read N- to C-terminus: U3-theraphotoxin-Hhn1a 8 (87 aa).

Positions 1-24 (MVNMKASMFLTFAGLVLLFVVCYA) are cleaved as a signal peptide. Residues 25–52 (SGSEEKEFPKEMLSSIFAVDNDFKQEER) constitute a propeptide that is removed on maturation. 3 disulfides stabilise this stretch: cysteine 54/cysteine 67, cysteine 61/cysteine 72, and cysteine 66/cysteine 79.

It belongs to the neurotoxin 10 (Hwtx-1) family. 51 (Hntx-8) subfamily. Hntx-8 sub-subfamily. As to expression, expressed by the venom gland.

It is found in the secreted. Functionally, ion channel inhibitor. The protein is U3-theraphotoxin-Hhn1a 8 of Cyriopagopus hainanus (Chinese bird spider).